We begin with the raw amino-acid sequence, 215 residues long: Calcium-binding protein 7 (215 aa).

Residues 1-188 (MPFHPVTAAL…QIRQTCVRKS (188 aa)) lie on the Cytoplasmic side of the membrane. 2 consecutive EF-hand domains span residues 33-68 (DELE…LGYM) and 69-104 (PNEV…KLST). Ca(2+) contacts are provided by Asp-46, Asp-48, Asn-50, Glu-57, Asp-82, Asp-84, Asp-86, Gln-88, and Glu-93. Residues 189–209 (LICAFAIAFIISVMLIAANQV) form a helical; Anchor for type IV membrane protein membrane-spanning segment. At 210-215 (LRSGMK) the chain is on the extracellular side.

As to quaternary structure, interacts with PI4KB. This binding competes with FREQ/NCS1 binding in a calcium-dependent manner.

The protein localises to the golgi apparatus. It is found in the trans-Golgi network membrane. The protein resides in the cytoplasm. Its subcellular location is the perinuclear region. It localises to the cell membrane. Functionally, negatively regulates Golgi-to-plasma membrane trafficking by interacting with PI4KB and inhibiting its activity. The sequence is that of Calcium-binding protein 7 (CABP7) from Homo sapiens (Human).